A 151-amino-acid polypeptide reads, in one-letter code: Nucleoside diphosphate kinase (151 aa).

K11, F59, R87, R104, and N114 together coordinate ATP. H117 serves as the catalytic Pros-phosphohistidine intermediate.

It belongs to the NDK family. Homotrimer. Mg(2+) is required as a cofactor.

It carries out the reaction a 2'-deoxyribonucleoside 5'-diphosphate + ATP = a 2'-deoxyribonucleoside 5'-triphosphate + ADP. It catalyses the reaction a ribonucleoside 5'-diphosphate + ATP = a ribonucleoside 5'-triphosphate + ADP. Functionally, major role in the synthesis of nucleoside triphosphates other than ATP. The ATP gamma phosphate is transferred to the NDP beta phosphate via a ping-pong mechanism, using a phosphorylated active-site intermediate. The protein is Nucleoside diphosphate kinase (ndk1) of Schizosaccharomyces pombe (strain 972 / ATCC 24843) (Fission yeast).